A 171-amino-acid chain; its full sequence is Large ribosomal subunit protein uL10 (171 aa).

This sequence belongs to the universal ribosomal protein uL10 family. As to quaternary structure, part of the ribosomal stalk of the 50S ribosomal subunit. The N-terminus interacts with L11 and the large rRNA to form the base of the stalk. The C-terminus forms an elongated spine to which L12 dimers bind in a sequential fashion forming a multimeric L10(L12)X complex.

In terms of biological role, forms part of the ribosomal stalk, playing a central role in the interaction of the ribosome with GTP-bound translation factors. The polypeptide is Large ribosomal subunit protein uL10 (Corynebacterium glutamicum (strain ATCC 13032 / DSM 20300 / JCM 1318 / BCRC 11384 / CCUG 27702 / LMG 3730 / NBRC 12168 / NCIMB 10025 / NRRL B-2784 / 534)).